Consider the following 467-residue polypeptide: Uronate isomerase (467 aa).

It belongs to the metallo-dependent hydrolases superfamily. Uronate isomerase family.

It catalyses the reaction D-glucuronate = D-fructuronate. It carries out the reaction aldehydo-D-galacturonate = keto-D-tagaturonate. The protein operates within carbohydrate metabolism; pentose and glucuronate interconversion. The chain is Uronate isomerase from Actinobacillus succinogenes (strain ATCC 55618 / DSM 22257 / CCUG 43843 / 130Z).